The sequence spans 265 residues: Novel plant SNARE 12 (265 aa).

Over 1-217 (MASELPMSPH…IGRQVATDKC (217 aa)) the chain is Cytoplasmic. Positions 32–106 (LDKIKDSSRQ…ALRKTYLNTL (75 aa)) form a coiled coil. Ser-74 carries the post-translational modification Phosphoserine. The region spanning 146 to 208 (MKRMDETDQA…KKASQLVKEI (63 aa)) is the t-SNARE coiled-coil homology domain. Residues 218-238 (IMAFLFLIVCGVIAIIIVKIV) form a helical; Anchor for type IV membrane protein membrane-spanning segment. Residues 239–265 (NPNNKDIRDIPGLAPPAQSRKLLYFRE) lie on the Vesicular side of the membrane.

This sequence belongs to the novel plant SNARE family. As to expression, expressed in roots, stems, flower, siliques and leaves.

The protein resides in the membrane. Functionally, vesicle trafficking protein that functions in the secretory pathway. This is Novel plant SNARE 12 (NPSN12) from Arabidopsis thaliana (Mouse-ear cress).